A 306-amino-acid polypeptide reads, in one-letter code: Ribonuclease Z (306 aa).

Zn(2+) is bound by residues His63, His65, Asp67, His68, His141, Asp211, and His269. The active-site Proton acceptor is Asp67.

The protein belongs to the RNase Z family. In terms of assembly, homodimer. Requires Zn(2+) as cofactor.

The catalysed reaction is Endonucleolytic cleavage of RNA, removing extra 3' nucleotides from tRNA precursor, generating 3' termini of tRNAs. A 3'-hydroxy group is left at the tRNA terminus and a 5'-phosphoryl group is left at the trailer molecule.. Functionally, zinc phosphodiesterase, which displays some tRNA 3'-processing endonuclease activity. Probably involved in tRNA maturation, by removing a 3'-trailer from precursor tRNA. The chain is Ribonuclease Z from Staphylococcus aureus (strain Mu3 / ATCC 700698).